The primary structure comprises 654 residues: Hepatocyte growth factor activator serine proteases (654 aa).

The first 33 residues, 1–33 (MGRWAWGPSLCPLPGMALLLLLLLLLVPHGAQP), serve as a signal peptide directing secretion. The disordered stretch occupies residues 34 to 100 (QAGGNLTEPP…SSSPGDPVLT (67 aa)). Residues 34 to 370 (QAGGNLTEPP…RLAACESLAR (337 aa)) constitute a propeptide, removed in mature form. N-linked (GlcNAc...) asparagine glycosylation is found at asparagine 38 and asparagine 46. Positions 57–81 (PVTSVTPVTPATSAPEAQGPRGRGL) are enriched in low complexity. A Fibronectin type-II domain is found at 101-148 (VDGQPCRFPFRYGGRMLHACTSEGSAHRKWCATTHNYDRDRAWGYCVQ). 19 disulfide bridges follow: cysteine 106-cysteine 131, cysteine 120-cysteine 146, cysteine 162-cysteine 173, cysteine 167-cysteine 184, cysteine 186-cysteine 195, cysteine 200-cysteine 228, cysteine 226-cysteine 235, cysteine 243-cysteine 254, cysteine 248-cysteine 265, cysteine 267-cysteine 276, cysteine 284-cysteine 365, cysteine 305-cysteine 347, cysteine 336-cysteine 360, cysteine 393-cysteine 520, cysteine 431-cysteine 447, cysteine 439-cysteine 509, cysteine 534-cysteine 603, cysteine 566-cysteine 582, and cysteine 593-cysteine 621. Residues 158–196 (ALDSCASSPCLNGGSCSHTQDPGSYHCTCPMAFTGRNCD) enclose the EGF-like 1 domain. The Fibronectin type-I domain maps to 198–238 (EKCFDETRYEHLEAGDRWARVSQGQVEQCECAGGQIRCEGT). One can recognise an EGF-like 2 domain in the interval 239-277 (RHTACLSSPCLNGGTCHLIVATGTTVCSCPPGHAGRLCN). In terms of domain architecture, Kringle spans 283 to 365 (RCFVGNGTEY…SWEYCRLAAC (83 aa)). Residue asparagine 288 is glycosylated (N-linked (GlcNAc...) asparagine). In terms of domain architecture, Peptidase S1 spans 407–645 (IIGGSSSLPG…YVDWIKDRIW (239 aa)). Histidine 446 serves as the catalytic Charge relay system. N-linked (GlcNAc...) asparagine glycans are attached at residues asparagine 467 and asparagine 491. Aspartate 496 functions as the Charge relay system in the catalytic mechanism. A glycan (N-linked (GlcNAc...) asparagine) is linked at asparagine 545. Residue serine 597 is the Charge relay system of the active site.

This sequence belongs to the peptidase S1 family. As to quaternary structure, heterodimer of a short chain and a long chain linked by a disulfide bond. Post-translationally, the active form of HGFAC presents in the serum is derived from the COOH-terminal region of the precursor by the cleavage of bonds between Arg-370 and Ile-371 and Arg-406 and Ile-407. As to expression, liver.

Its subcellular location is the secreted. Its function is as follows. Serine protease that hydrolyzes the inactive zymogen hepatocyte growth factor (HGFsc) to an activated disulfide-linked heterodimer, then initiating hepatocyte growth factor receptor signaling pathway. In Canis lupus familiaris (Dog), this protein is Hepatocyte growth factor activator serine proteases (HGFAC).